The chain runs to 220 residues: MKLNKYIDHTLLKQDAKKKQIDSLLSEAREYGFASVCVNPTWVEHAKKGLEGTDVKVCTVVGFPLGATTSTVKAFETKEAIQNGADEIDMVINVGALKSGDLALVESDIRAVVEASGDKLVKVIIEACLLTDQEKVLACQLAQKAGADFVKTSTGFSTGGATIADVRLMRETVGPDMGVKAAGGARSYADALTFVEAGATRIGTSAGVAILKGELADGDY.

The Proton donor/acceptor role is filled by Asp89. Lys151 acts as the Schiff-base intermediate with acetaldehyde in catalysis. Catalysis depends on Lys180, which acts as the Proton donor/acceptor.

The protein belongs to the DeoC/FbaB aldolase family. DeoC type 1 subfamily.

It localises to the cytoplasm. It catalyses the reaction 2-deoxy-D-ribose 5-phosphate = D-glyceraldehyde 3-phosphate + acetaldehyde. It functions in the pathway carbohydrate degradation; 2-deoxy-D-ribose 1-phosphate degradation; D-glyceraldehyde 3-phosphate and acetaldehyde from 2-deoxy-alpha-D-ribose 1-phosphate: step 2/2. Catalyzes a reversible aldol reaction between acetaldehyde and D-glyceraldehyde 3-phosphate to generate 2-deoxy-D-ribose 5-phosphate. This chain is Deoxyribose-phosphate aldolase, found in Streptococcus pneumoniae serotype 19F (strain G54).